The primary structure comprises 445 residues: Ribosomal protein uS12 methylthiotransferase RimO (445 aa).

In terms of domain architecture, MTTase N-terminal spans 4–119 (IKVALVSLGC…LLESIKVFLK (116 aa)). Residues Cys13, Cys48, Cys82, Cys156, Cys160, and Cys163 each contribute to the [4Fe-4S] cluster site. The region spanning 142–372 (TTPTYTAYVR…MILQQSISKD (231 aa)) is the Radical SAM core domain. Residues 375–441 (KEKIGKIYEV…EYDLIGVVYN (67 aa)) enclose the TRAM domain.

Belongs to the methylthiotransferase family. RimO subfamily. The cofactor is [4Fe-4S] cluster.

It is found in the cytoplasm. The catalysed reaction is L-aspartate(89)-[ribosomal protein uS12]-hydrogen + (sulfur carrier)-SH + AH2 + 2 S-adenosyl-L-methionine = 3-methylsulfanyl-L-aspartate(89)-[ribosomal protein uS12]-hydrogen + (sulfur carrier)-H + 5'-deoxyadenosine + L-methionine + A + S-adenosyl-L-homocysteine + 2 H(+). Functionally, catalyzes the methylthiolation of an aspartic acid residue of ribosomal protein uS12. The polypeptide is Ribosomal protein uS12 methylthiotransferase RimO (Clostridium botulinum (strain Loch Maree / Type A3)).